The primary structure comprises 429 residues: Ribosomal RNA small subunit methyltransferase B (429 aa).

Residues 254-260 (CAAPGGK), D277, D303, and D322 contribute to the S-adenosyl-L-methionine site. Residue C375 is the Nucleophile of the active site.

This sequence belongs to the class I-like SAM-binding methyltransferase superfamily. RsmB/NOP family.

The protein localises to the cytoplasm. The enzyme catalyses cytidine(967) in 16S rRNA + S-adenosyl-L-methionine = 5-methylcytidine(967) in 16S rRNA + S-adenosyl-L-homocysteine + H(+). Functionally, specifically methylates the cytosine at position 967 (m5C967) of 16S rRNA. The chain is Ribosomal RNA small subunit methyltransferase B from Escherichia coli O7:K1 (strain IAI39 / ExPEC).